Here is a 153-residue protein sequence, read N- to C-terminus: MTGIFCIFMWYLLLILYMGQIKGVFGTYEPITYKTGCSLWGIFFIISGISIIRATWYPSQRQLTCAMLENILCMILAIISMILTIVELSTFKSVSYRNYGQAKLGRQISRVLLSFYPLEVSMALTYSIFGCVGLCRKKEDARTADTEEVEDAF.

A run of 4 helical transmembrane segments spans residues 1-21, 36-56, 71-91, and 111-131; these read MTGIFCIFMWYLLLILYMGQI, GCSLWGIFFIISGISIIRATW, ILCMILAIISMILTIVELSTF, and VLLSFYPLEVSMALTYSIFGC.

This sequence belongs to the MS4A family.

It localises to the membrane. May be involved in signal transduction as a component of a multimeric receptor complex. In Bos taurus (Bovine), this protein is Membrane-spanning 4-domains subfamily A member 13 (MS4A13).